Consider the following 312-residue polypeptide: DNA-directed RNA polymerase subunit alpha (312 aa).

The tract at residues 1-229 is alpha N-terminal domain (alpha-NTD); it reads MLQYQIDRIE…ELFQPLATVT (229 aa). An alpha C-terminal domain (alpha-CTD) region spans residues 245-312; sequence QIPLEELNLS…ISIPQSRTSA (68 aa).

Belongs to the RNA polymerase alpha chain family. In terms of assembly, in cyanobacteria the RNAP catalytic core is composed of 2 alpha, 1 beta, 1 beta', 1 gamma and 1 omega subunit. When a sigma factor is associated with the core the holoenzyme is formed, which can initiate transcription.

The enzyme catalyses RNA(n) + a ribonucleoside 5'-triphosphate = RNA(n+1) + diphosphate. DNA-dependent RNA polymerase catalyzes the transcription of DNA into RNA using the four ribonucleoside triphosphates as substrates. In Prochlorococcus marinus (strain MIT 9313), this protein is DNA-directed RNA polymerase subunit alpha.